The chain runs to 504 residues: MSSSRNFDLEYDDYKERRNAAGMGSRASSRNGGRFKPIDKEKEKEKKEIGDYGLPKNEYKMQGYDERSSDVGADPLASVRTLRNNLRVMSLEHRDKDEPVKSHLCQSACDDLSKAEKQLVDLSHKRSDAVVRGDSRQAEQIAKDMDRVKSDAIRNAYSDLMMEDGTMKAFGVNSKWTPDKNPMPSDDWKPMTPMKPRKRAETPKGRKTESRQSNRGNNDNGDQRMTSKATTRSPERRVIPTEPSKPKTTRKNQRLSTIGHVPEAIPVVDTPLPGGSTVQDDPYKMPTYVGRCPHCQLTESGLGRAGGMEKHFAKYCKVMTSCKYCMKLTMVSQLTDHLIYRCEFLQDTMEACNDCGLAIEKEDQKRGGSHPMCRGRRPPTGAQWCPLCTIAVEDNEENWREHLLNNCYNNQRRDGPEKDPWEMKQEQEDILLGAKEKKKREMEEEERLKKEAEIRRQQQQVVVNNTGYPGKMIDADKLVVALQEIQERKKAEKKKKLKDIEKET.

Disordered stretches follow at residues 1 to 59 and 171 to 255; these read MSSS…KNEY and GVNS…NQRL. Basic and acidic residues-rich tracts occupy residues 36–50 and 199–212; these read KPIDKEKEKEKKEIG and RAETPKGRKTESRQ. A compositionally biased stretch (polar residues) spans 213–232; that stretch reads SNRGNNDNGDQRMTSKATTR.

This is an uncharacterized protein from Caenorhabditis elegans.